Reading from the N-terminus, the 63-residue chain is Protein virE1 (63 aa).

Forms heterodimers with virE2 that prevent virE2 anarchic homopolymerization and binding to DNA.

Its function is as follows. Involved in DNA transformation; controls virE2 polymerization and prevents virE2 binding to DNA. The chain is Protein virE1 (virE1) from Agrobacterium fabrum (strain C58 / ATCC 33970) (Agrobacterium tumefaciens (strain C58)).